The sequence spans 291 residues: RPE-retinal G protein-coupled receptor (291 aa).

The Extracellular portion of the chain corresponds to 1–15 (MAESGTLPTGFGELE). Residues 16–36 (VLAVGTVLLVEALSGLSLNIL) traverse the membrane as a helical segment. Over 37 to 52 (TILSFCKTPELRTPSH) the chain is Cytoplasmic. The helical transmembrane segment at 53-73 (LLVLSLALADSGISLNALVAA) threads the bilayer. The Extracellular portion of the chain corresponds to 74 to 91 (TSSLLRRWPYGSEGCQAH). Cysteines 88 and 162 form a disulfide. A helical membrane pass occupies residues 92–112 (GFQGFVTALASICSSAAVAWG). Over 113–130 (RYHHFCTRSRLDWNTAVS) the chain is Cytoplasmic. A helical transmembrane segment spans residues 131–151 (LVFFVWLSSAFWAALPLLGWG). The Extracellular segment spans residues 152-175 (HYDYEPLGTCCTLDYSRGDRNFTS). N-linked (GlcNAc...) asparagine glycosylation is present at Asn-172. The chain crosses the membrane as a helical span at residues 176-196 (FLFTMAFFNFLLPLFITVVSY). At 197–219 (RLMEQKLGKTSRPPVNTVLPART) the chain is on the cytoplasmic side. Residues 220–240 (LLLGWGPYALLYLYATIADAT) form a helical membrane-spanning segment. Topologically, residues 241-247 (SISPKLQ) are extracellular. A helical membrane pass occupies residues 248-268 (MVPALIAKAVPTVNAMNYALG). At Lys-255 the chain carries N6-(retinylidene)lysine. The Cytoplasmic segment spans residues 269 to 291 (SEMVHRGIWQCLSPQRREHSREQ).

This sequence belongs to the G-protein coupled receptor 1 family. Opsin subfamily. In terms of processing, covalently binds all-trans- and 11-cis-retinal. Preferentially expressed at high levels in the retinal pigment epithelium (RPE) and Mueller cells of the neural retina.

Its subcellular location is the membrane. Receptor for all-trans- and 11-cis-retinal. Binds preferentially to the former and may catalyze the isomerization of the chromophore by a retinochrome-like mechanism. In Bos taurus (Bovine), this protein is RPE-retinal G protein-coupled receptor (RGR).